Here is a 2383-residue protein sequence, read N- to C-terminus: MPSATAQDARAPIAIIGMSCRFPGDAEDPLKFWDLLKEGREAYSEKTHRYNEEAFYHPGGQFNNKRQNVLPVKGGYMLKQDPYVFDAAFFNITAAEAISFDPKQRIAMEVTYEAFENAGMTLQKAAGTRTACYIGTSMSDYRDSIVRDFGNYPKYHLLGTSDEMISNRISHFFDLRGPSATIETACSSSHVATHIACQSIQSGESDMAVVGGIGMLLVPESTMQLNNLGFLSAFGQSRAFDASGAGYGRGEGCGIFILKRLDKAMEDGDTIRAIIRGSGVNSDGWTQGVTMPSGDAQASLIEYVYKSNGLDYEGTQYVEAHGTGTKVGDPTEAEALHRTIGQPTPKRKKLWMGSVKTNIGHLEAAAGAASMVKGVLAMEHGFIPPTLHFKNPNPAIKFDEWQLGVPTKLMPWPACQTRRMSTSAFGMGGTNAHLVLERPNEPAIPILERGAIGVSRKNQKRLFVFSSHDQAGFKRICDRLVEHVDTLGPKSSNPDYLANLAHTLAVGRSGLTWKSSCFAENIVELREHLTSSSLPEGAVRAAGGQTRIGFVFTGQGAQWARMGVELMDRKVFGKSVAKSTALLQEMGCEWDPVVELSKSQKESQLVKPEISQPICTILQIALIDELRSWGIRPAKVVGHSSGEIAAAYCMGALTHRDALAAAYFRGKASANVKRRGGMMAVGTTPEDAKKLITETKAQATVACVNSPRSITLSGDVDALEALRETFEKQGVFARRLKVDVAYHSSHMRSCSAEYQSSIMDLEPSELDGANESKEPILMVSSVTGGLVDAEALGPYYWIRNLISPVLFSDALKELVCPADSGGSSDVDMLIEIGPHSALRAPIEQILSHHDIKNVEYASMLTRGESGSETILGFAAELFRRGVPFDIAKANDDAQCRLLTDLPPYPFNHSQQFRAESRLQRETLTQQNPTKSLIGAERPSLDEHERVWRGFINLDDEPWLRDHTVGSTVLFPGAAVITIVLEAAQQMAEAGKTIRSLTLRDISFMAMMTLLEGTPTEVITHVRPHLVATTGTTPATWWEFTVSSCTGVTSNVRNNCRGLFSINYEDSRSSHMEMELERFEGDRVATYHQIKKECVEVISKQAFYDTLARSALAYGPHFQGVDNCRPGNGQTAFEVIVSDLGETFNKDKLTRPFLIHGGTLDSIFQAWVGSTKDSNGPGSFGFEKPLLPKSIGELEISLDFPGEVGYSLNGLSTSKKHGFSEWSTDITMFDRNVSKLLLSVKDFHLAELEVEDADRPDRTEHVDVDPAEISSEPKWNYALDFMSTQEIKQVVETASSSDDKLMQFISLAIHQRPNLEILELVESANQLRQTAVSKLPRGRLLPNQASCAILGGDYDNNNESAAAFGRIFGLDSSEAVPSDVAPADLVIANFNISNLEDIAERLVVLAKPEARILLIADKKVDSSVTSLADKGFDLVFSTEADSESLSLYCFGKKEEPQPERLTNGSTGQEVVILEPSSLSAESDRFSKDLQHALDNIGYNVSTVTDIHGAHAAKARIYVSLLEIEQPVLENLSQSEFEGLRDLLLNCDRLLWITRGDGPSLQLVDGFSRTIRSEFAGVEFQVLHLSGKNSRQGPSLAAQIVFKQSTESEFREDDGHLQISRWYRSVEEDDHIRNHLLDSIRTVSLPVGGNIEDNSSYRLAVGKPGLLNTLHFVSDDNTEAPLADNEVEMQVKASGINFRDIMGSMGLLPVSGIGQEASGIVVRVGKLGASSLKPGDRISTLTVGGTHATRIRCDYRVAKKIPEGMSFEEAAGIPVVHCTAYYALVKLAKLRPGQSVLIHAAAGGTGQAALQLAKHLGLTIFATVGTDTKRALIREKYGVPDENIFHSRDGSFVKGIERATNGRGVDCVLNSLSGELLRLSWGCLATFGTFVEIGLRDITDNMRLDMRPFAKSTTFSFINMVTLLQENPDAMGEILESVFEMIHQNVLQPVFPVTVYPVGKVEEAFRLMQQGKHVGKMILSFAAGDARAPVLCRAKDSFKLDPNATYLFIGGLGGLGRSMAVGFVACGARNIAFLSRSGDSKPEAKAVVDELRELGTRVQVYLGDVSDEASFRGAMEQCSRELPPVKGVIQMAMVLRDVVFEKMKYDDWTTGLRPKVQGTWNLHTFFDKDRPLDFMIFFSSIAGVFGNPSQAQYAAGNTYQDSLAKYRRDRGLKAVSVNLGIMRDVGVIAEGDSHFMQQWEEVLGIREPAFHALIKSIINGQLETSNIREAAKCPVQVTVGLGTGDILARNKIREPDYFRDPRFGALAVCSSTSTAAASSGENGVSIASQLAGLSNEADPEEAAGPIITKALVSKLAKILQVPPSEIDSSRPMYRYGVDSLVAIEVRNWITKEMSANMSLMDILGAMPMEQFAVQIAKKSKLVGGS.

In terms of domain architecture, Ketosynthase family 3 (KS3) spans 10–438 (RAPIAIIGMS…GTNAHLVLER (429 aa)). Catalysis depends on for beta-ketoacyl synthase activity residues Cys186, His321, and His361. Residues 550–881 (FVFTGQGAQW…GFAAELFRRG (332 aa)) form a malonyl-CoA:ACP transacylase (MAT) domain region. Residues 930 to 1066 (KSLIGAERPS…GLFSINYEDS (137 aa)) form an N-terminal hotdog fold region. Residues 930–1253 (KSLIGAERPS…LAELEVEDAD (324 aa)) form the PKS/mFAS DH domain. The tract at residues 932–1250 (LIGAERPSLD…DFHLAELEVE (319 aa)) is dehydratase (DH) domain. Catalysis depends on His962, which acts as the Proton acceptor; for dehydratase activity. Residues 1094–1253 (VEVISKQAFY…LAELEVEDAD (160 aa)) are C-terminal hotdog fold. The Proton donor; for dehydratase activity role is filled by Asp1160. Positions 1663 to 1977 (GLLNTLHFVS…QGKHVGKMIL (315 aa)) are enoyl reductase (ER) domain. The active-site Phosphocysteine intermediate is the Cys1776. The interval 2002–2182 (ATYLFIGGLG…VSVNLGIMRD (181 aa)) is ketoreductase (KR) domain. The Carrier domain occupies 2300–2377 (AAGPIITKAL…QFAVQIAKKS (78 aa)). Ser2337 is subject to O-(pantetheine 4'-phosphoryl)serine.

It functions in the pathway secondary metabolite biosynthesis. Reducing polyketide synthase; part of the gene cluster that mediates the biosynthesis of radicicol, a resorcylic acid lactone (RAL) that irreversibly inhibits the HSP90 molecular chaperone, an important target for cancer chemotherapy. The radicicol cluster encodes only two apparent post-PKS enzymes, a cytochrome P450 monooxygenase (rdc4) and a non-heme halogenase (rdc2) that could introduce the epoxide and the chlorine, respectively. If this cluster includes all the genes required for radicicol biosynthesis, the remaining structural features of radicicol are presumably generated by the PKSs rdc1 and rdc5. The C-2' ketone could arise if the R-PKS rdc5 and NR-PKS rdc1 each carry out four iterations, in contrast to the five iteration-three iteration split for the hypothemycin PKSs. The origin of the cis 5',6' double bond is not known. The radicicol R-PKS rdc5 ER domain may catalyze either double bond isomerization or reduction in the third iteration. The protein is Reducing polyketide synthase rdc5 of Metacordyceps chlamydosporia (Nematophagous fungus).